We begin with the raw amino-acid sequence, 316 residues long: Protein PXR1 (316 aa).

Residues 25–71 form the G-patch domain; that stretch reads TSRFGHQYLERMGWKPGKGLGLVEHATTSHVKVSIKDDNLGLGSKLA. The segment at 146–280 is disordered; the sequence is GTTKKRKIDS…DSMLMPKEQL (135 aa). A compositionally biased stretch (basic and acidic residues) spans 179-195; sequence DRKEKEEKKTEKENSEI. Residues 196 to 209 are compositionally biased toward basic residues; that stretch reads KKKKKEKKEKKEKK. The span at 210–240 shows a compositional bias: basic and acidic residues; the sequence is EKKDKNEKKEKKDKNEKKEKKDKNEEKEKKE. Over residues 241–260 the composition is skewed to basic residues; that stretch reads KKEKKEKKDKKDKKDKKDKK. Residues 261-270 are compositionally biased toward basic and acidic residues; sequence EKKEVKEVTR.

It belongs to the PINX1 family.

Its subcellular location is the nucleus. It is found in the nucleolus. In terms of biological role, involved in rRNA-processing at A0, A1 and A2 sites and negatively regulates telomerase. This Debaryomyces hansenii (strain ATCC 36239 / CBS 767 / BCRC 21394 / JCM 1990 / NBRC 0083 / IGC 2968) (Yeast) protein is Protein PXR1 (PXR1).